Reading from the N-terminus, the 564-residue chain is Dihydroxy-acid dehydratase (564 aa).

Aspartate 80 lines the Mg(2+) pocket. Residue cysteine 121 participates in [2Fe-2S] cluster binding. Mg(2+) is bound by residues aspartate 122 and lysine 123. At lysine 123 the chain carries N6-carboxylysine. Cysteine 194 serves as a coordination point for [2Fe-2S] cluster. Residue glutamate 447 coordinates Mg(2+). Serine 473 functions as the Proton acceptor in the catalytic mechanism.

It belongs to the IlvD/Edd family. As to quaternary structure, homodimer. The cofactor is [2Fe-2S] cluster. Mg(2+) serves as cofactor.

The enzyme catalyses (2R)-2,3-dihydroxy-3-methylbutanoate = 3-methyl-2-oxobutanoate + H2O. The catalysed reaction is (2R,3R)-2,3-dihydroxy-3-methylpentanoate = (S)-3-methyl-2-oxopentanoate + H2O. Its pathway is amino-acid biosynthesis; L-isoleucine biosynthesis; L-isoleucine from 2-oxobutanoate: step 3/4. It functions in the pathway amino-acid biosynthesis; L-valine biosynthesis; L-valine from pyruvate: step 3/4. In terms of biological role, functions in the biosynthesis of branched-chain amino acids. Catalyzes the dehydration of (2R,3R)-2,3-dihydroxy-3-methylpentanoate (2,3-dihydroxy-3-methylvalerate) into 2-oxo-3-methylpentanoate (2-oxo-3-methylvalerate) and of (2R)-2,3-dihydroxy-3-methylbutanoate (2,3-dihydroxyisovalerate) into 2-oxo-3-methylbutanoate (2-oxoisovalerate), the penultimate precursor to L-isoleucine and L-valine, respectively. This Listeria welshimeri serovar 6b (strain ATCC 35897 / DSM 20650 / CCUG 15529 / CIP 8149 / NCTC 11857 / SLCC 5334 / V8) protein is Dihydroxy-acid dehydratase.